The sequence spans 379 residues: uncharacterized protein (379 aa).

Disordered regions lie at residues 1–20 (MLPQNSQVVHGVQDGPPVGP), 227–290 (VSQR…LQGH), and 331–371 (PGCA…RAGH). Residues 7-20 (QVVHGVQDGPPVGP) show a composition bias toward low complexity. The span at 249-261 (GCKDPRVRKEPGR) shows a compositional bias: basic and acidic residues.

This is an uncharacterized protein from Dryophytes versicolor (chameleon treefrog).